Here is a 498-residue protein sequence, read N- to C-terminus: Neoxanthin synthase, chloroplastic (498 aa).

Residues M1–T33 constitute a chloroplast transit peptide. The segment at P16 to S38 is disordered. Polar residues predominate over residues I22–T33. Position 84 to 112 (V84 to P112) interacts with NAD(+).

It belongs to the lycopene cyclase family.

It localises to the plastid. Its subcellular location is the chloroplast. It catalyses the reaction all-trans-violaxanthin = all-trans-neoxanthin. It participates in carotenoid biosynthesis; neoxanthin biosynthesis. Its function is as follows. Involved in the synthesis of neoxanthin, the last product of carotenoid synthesis and a precursor of abscisic acid. The protein is Neoxanthin synthase, chloroplastic (NXS) of Solanum tuberosum (Potato).